The primary structure comprises 370 residues: Sphingosine 1-phosphate receptor 2 (370 aa).

Residues 1-57 (MTTCRLFAGFCQAVTMSKYSQYFNKTLIQVHYLTAKEMTAEELRDRIESKQSLSSLN) are Extracellular-facing. An N-linked (GlcNAc...) asparagine glycan is attached at Asn-24. Residues 58–78 (ILFVVICSIIILENLLVLIAV) form a helical membrane-spanning segment. Over 79 to 87 (FRNKKFHSA) the chain is Cytoplasmic. Residues 88–108 (MFFFIGNLAFSDLLAGSAYIA) traverse the membrane as a helical segment. Over 109 to 128 (NIFLSGPRTFHLTPVQWFIR) the chain is Extracellular. A helical transmembrane segment spans residues 129-149 (EGTAFIALSASVFSLLAIAIE). Over 150-167 (RYIAITKVKVYGSNKTCR) the chain is Cytoplasmic. Residues 168–193 (MFLLIGACWVMSILLGGLPIIGWNCI) traverse the membrane as a helical segment. The Extracellular portion of the chain corresponds to 194–219 (NNLDDCSAVLPLNTRYYIRFVVTIFS). The helical transmembrane segment at 220–230 (IILLSIVILYV) threads the bilayer. At 231–254 (RIYLIVRTSHQEATNSPAYALLKT) the chain is on the cytoplasmic side. Residues 255 to 275 (VTIVLGVFIICWLPAFTILLL) form a helical membrane-spanning segment. At 276-289 (DTSCKMKQCPILNN) the chain is on the extracellular side. A helical membrane pass occupies residues 290–310 (AGIFFSFATLNSALNPLIYTL). Over 311–370 (RSKDMRKEFLRVLCCWGLLNCGRPPHRCMVPLKSSSSMEHCTNKHEHQSIPIMQDCTTCV) the chain is Cytoplasmic. A lipid anchor (S-palmitoyl cysteine) is attached at Cys-325.

It belongs to the G-protein coupled receptor 1 family.

It is found in the cell membrane. Functionally, receptor for the lysosphingolipid sphingosine 1-phosphate (S1P). S1P receptor is critical for cell migration and epithelial integrity during vertebrate embryogenesis. Receptor for the chemokine-like protein FAM19A5. Mediates the inhibitory effect of FAM19A5 on vascular smooth muscle cell proliferation and migration. This chain is Sphingosine 1-phosphate receptor 2 (s1pr2), found in Danio rerio (Zebrafish).